Here is a 127-residue protein sequence, read N- to C-terminus: Holo-[acyl-carrier-protein] synthase (127 aa).

Asp-8 and Glu-57 together coordinate Mg(2+).

Belongs to the P-Pant transferase superfamily. AcpS family. Mg(2+) serves as cofactor.

The protein localises to the cytoplasm. It catalyses the reaction apo-[ACP] + CoA = holo-[ACP] + adenosine 3',5'-bisphosphate + H(+). In terms of biological role, transfers the 4'-phosphopantetheine moiety from coenzyme A to a Ser of acyl-carrier-protein. This Vesicomyosocius okutanii subsp. Calyptogena okutanii (strain HA) protein is Holo-[acyl-carrier-protein] synthase.